The sequence spans 340 residues: Glycerol-3-phosphate dehydrogenase [NAD(P)+] (340 aa).

3 residues coordinate NADPH: S13, W14, and K108. Sn-glycerol 3-phosphate contacts are provided by K108, G139, and S141. A143 is a binding site for NADPH. Residues K194, D247, S257, R258, and N259 each contribute to the sn-glycerol 3-phosphate site. Residue K194 is the Proton acceptor of the active site. R258 lines the NADPH pocket. 2 residues coordinate NADPH: V282 and E284.

This sequence belongs to the NAD-dependent glycerol-3-phosphate dehydrogenase family.

Its subcellular location is the cytoplasm. It carries out the reaction sn-glycerol 3-phosphate + NAD(+) = dihydroxyacetone phosphate + NADH + H(+). The catalysed reaction is sn-glycerol 3-phosphate + NADP(+) = dihydroxyacetone phosphate + NADPH + H(+). It functions in the pathway membrane lipid metabolism; glycerophospholipid metabolism. Functionally, catalyzes the reduction of the glycolytic intermediate dihydroxyacetone phosphate (DHAP) to sn-glycerol 3-phosphate (G3P), the key precursor for phospholipid synthesis. The chain is Glycerol-3-phosphate dehydrogenase [NAD(P)+] from Streptococcus thermophilus (strain CNRZ 1066).